A 1362-amino-acid polypeptide reads, in one-letter code: DNA-directed RNA polymerase subunit beta (1362 aa).

The protein belongs to the RNA polymerase beta chain family. As to quaternary structure, the RNAP catalytic core consists of 2 alpha, 1 beta, 1 beta' and 1 omega subunit. When a sigma factor is associated with the core the holoenzyme is formed, which can initiate transcription.

The enzyme catalyses RNA(n) + a ribonucleoside 5'-triphosphate = RNA(n+1) + diphosphate. Its function is as follows. DNA-dependent RNA polymerase catalyzes the transcription of DNA into RNA using the four ribonucleoside triphosphates as substrates. This chain is DNA-directed RNA polymerase subunit beta, found in Parvibaculum lavamentivorans (strain DS-1 / DSM 13023 / NCIMB 13966).